The chain runs to 610 residues: Prolactin receptor (610 aa).

The N-terminal stretch at 1 to 19 (MPSALAFVLLVLNISLLKG) is a signal peptide. The Extracellular segment spans residues 20–229 (QSPPGKPEIH…EMPNDFTLKD (210 aa)). Fibronectin type-III domains are found at residues 22-122 (PPGK…IVEP) and 124-224 (PPRN…MPND). A disulfide bridge links Cys31 with Cys41. Asn54 carries N-linked (GlcNAc...) asparagine glycosylation. Cys70 and Cys81 are joined by a disulfide. Residues Asn99 and Asn127 are each glycosylated (N-linked (GlcNAc...) asparagine). Zn(2+) contacts are provided by Asp206 and His207. The WSXWS motif signature appears at 210-214 (WSRWS). A helical membrane pass occupies residues 230 to 253 (TTVWIIVAILSAVICLIMVWAVAL). The Cytoplasmic portion of the chain corresponds to 254 to 610 (KGYSMMTCIF…DPTCFMHSFH (357 aa)). The short motif at 262 to 270 (IFPPVPGPK) is the Box 1 motif element. Disordered stretches follow at residues 317 to 355 (DERL…HSLL), 458 to 482 (TGEE…TPWP), and 564 to 584 (AKKA…ASFT). Over residues 318-327 (ERLMPSHSKE) the composition is skewed to basic and acidic residues. Residues 345–354 (GHGSYDSHSL) show a composition bias toward low complexity.

It belongs to the type I cytokine receptor family. Type 1 subfamily. In terms of assembly, interacts with SMARCA1. Interacts with NEK3 and VAV2 and this interaction is prolactin-dependent.

The protein localises to the membrane. In terms of biological role, this is a receptor for the anterior pituitary hormone prolactin. This chain is Prolactin receptor (Prlr), found in Rattus norvegicus (Rat).